A 375-amino-acid polypeptide reads, in one-letter code: Beta-1,3-N-acetylglucosaminyltransferase lunatic fringe (375 aa).

The Cytoplasmic segment spans residues 1–8 (MLKNWGKK). The helical; Signal-anchor for type II membrane protein transmembrane segment at 9-29 (LLLSIVGATLTCLLVLVVDQQ) threads the bilayer. Topologically, residues 30–375 (SRHMLETQSD…TPWCPWKAAY (346 aa)) are lumenal. Residues 53–73 (DLDPANPGDGGDPANSAQDSG) are disordered. Arg-125 contributes to the substrate binding site. An N-linked (GlcNAc...) asparagine glycan is attached at Asn-163. Disulfide bonds link Cys-164-Cys-175 and Cys-193-Cys-256. Asp-197 contacts substrate. Mn(2+) is bound at residue Asp-198. Asp-286 is a catalytic residue. Mn(2+) is bound at residue His-310. Cysteines 360 and 369 form a disulfide.

The protein belongs to the glycosyltransferase 31 family. Requires Mn(2+) as cofactor. Co(2+) is required as a cofactor. A soluble form may be derived from the membrane form by proteolytic processing. Detected in the neural tube, the eye and the otic vesicle, expression coincides with the region that produces the medial, intermediate and lateral neurons.

The protein resides in the golgi apparatus membrane. The enzyme catalyses 3-O-(alpha-L-fucosyl)-L-threonyl-[EGF-like domain protein] + UDP-N-acetyl-alpha-D-glucosamine = 3-O-(N-acetyl-beta-D-glucosaminyl-(1-&gt;3)-alpha-L-fucosyl)-L-threonyl-[EGF-like domain protein] + UDP + H(+). It catalyses the reaction 3-O-(alpha-L-fucosyl)-L-seryl-[EGF-like domain protein] + UDP-N-acetyl-alpha-D-glucosamine = 3-O-(N-acetyl-beta-D-glucosaminyl-(1-&gt;3)-alpha-L-fucosyl)-L-seryl-[EGF-like domain protein] + UDP + H(+). Its function is as follows. Glycosyltransferase that initiates the elongation of O-linked fucose residues attached to EGF-like repeats in the extracellular domain of Notch molecules. Essential mediator of somite segmentation and patterning. May be involved in mesoderm development. The polypeptide is Beta-1,3-N-acetylglucosaminyltransferase lunatic fringe (lfng) (Xenopus laevis (African clawed frog)).